The primary structure comprises 145 residues: Meiotically up-regulated gene 124 protein (145 aa).

The next 2 membrane-spanning stretches (helical) occupy residues 18–38 and 95–115; these read IILT…CPSI and FAWS…NFFL.

The protein resides in the membrane. Has a role in meiosis. This Schizosaccharomyces pombe (strain 972 / ATCC 24843) (Fission yeast) protein is Meiotically up-regulated gene 124 protein (mug124).